The sequence spans 939 residues: AP-2 complex subunit alpha-2 (939 aa).

Residues 11–12 (RG), Lys-43, Tyr-53, and 57–61 (KYVCK) contribute to the a 1,2-diacyl-sn-glycero-3-phospho-(1D-myo-inositol-3,4,5-trisphosphate) site. The disordered stretch occupies residues 612 to 681 (LAKLKKKKGP…AGPPPSSGGS (70 aa)). Residues 646–667 (PASTSAVSTPSPSADLLGLGAA) are compositionally biased toward low complexity. Residues 668 to 677 (PPAPAGPPPS) show a composition bias toward pro residues.

Belongs to the adaptor complexes large subunit family. Adaptor protein complex 2 (AP-2) is a heterotetramer composed of two large adaptins (alpha-type subunit AP2A1 or AP2A2 and beta-type subunit AP2B1), a medium adaptin (mu-type subunit AP2M1) and a small adaptin (sigma-type subunit AP2S1). Binds EPN1, EPS15, AMPH, SNAP91 and BIN1. Interacts with HIP1. Interacts with DGKD. Interacts with DENND1A, DENND1B and DENND1C. Interacts with FCHO1 and DAB2. Interacts with ATAT1; this interaction is required for efficient alpha-tubulin acetylation by ATAT1. Interacts with KIAA1107. Together with AP2B1 and AP2M1, it interacts with ADAM10; this interaction facilitates ADAM10 endocytosis from the plasma membrane during long-term potentiation in hippocampal neurons. Interacts with CLN3 (via dileucine motif). Interacts with ABCB11; this interaction regulates cell membrane expression of ABCB11 through its internalization in a clathrin-dependent manner and its subsequent degradation. Interacts with Cacfd1. Interacts with DNAJC6. Expressed in the brain (at protein level).

The protein localises to the cell membrane. It localises to the membrane. The protein resides in the coated pit. Component of the adaptor protein complex 2 (AP-2). Adaptor protein complexes function in protein transport via transport vesicles in different membrane traffic pathways. Adaptor protein complexes are vesicle coat components and appear to be involved in cargo selection and vesicle formation. AP-2 is involved in clathrin-dependent endocytosis in which cargo proteins are incorporated into vesicles surrounded by clathrin (clathrin-coated vesicles, CCVs) which are destined for fusion with the early endosome. The clathrin lattice serves as a mechanical scaffold but is itself unable to bind directly to membrane components. Clathrin-associated adaptor protein (AP) complexes which can bind directly to both the clathrin lattice and to the lipid and protein components of membranes are considered to be the major clathrin adaptors contributing the CCV formation. AP-2 also serves as a cargo receptor to selectively sort the membrane proteins involved in receptor-mediated endocytosis. AP-2 seems to play a role in the recycling of synaptic vesicle membranes from the presynaptic surface. AP-2 recognizes Y-X-X-[FILMV] (Y-X-X-Phi) and [ED]-X-X-X-L-[LI] endocytosis signal motifs within the cytosolic tails of transmembrane cargo molecules. AP-2 may also play a role in maintaining normal post-endocytic trafficking through the ARF6-regulated, non-clathrin pathway. During long-term potentiation in hippocampal neurons, AP-2 is responsible for the endocytosis of ADAM10. The AP-2 alpha subunit binds polyphosphoinositide-containing lipids, positioning AP-2 on the membrane. The AP-2 alpha subunit acts via its C-terminal appendage domain as a scaffolding platform for endocytic accessory proteins. The AP-2 alpha and AP-2 sigma subunits are thought to contribute to the recognition of the [ED]-X-X-X-L-[LI] motif. The polypeptide is AP-2 complex subunit alpha-2 (AP2A2) (Homo sapiens (Human)).